A 296-amino-acid chain; its full sequence is Pyridoxine/pyridoxal/pyridoxamine kinase (296 aa).

Residues Ser-23 and His-59 each coordinate substrate. Asp-125 lines the ATP pocket. Mg(2+) is bound at residue Tyr-136. Residues Thr-157, Glu-162, Thr-195, 222–225 (HQRV), and Thr-232 contribute to the ATP site. Position 162 (Glu-162) interacts with Mg(2+). Residue Asp-234 participates in substrate binding.

Belongs to the pyridoxine kinase family. PdxK subfamily. As to quaternary structure, homodimer. Mg(2+) serves as cofactor.

It carries out the reaction pyridoxal + ATP = pyridoxal 5'-phosphate + ADP + H(+). It catalyses the reaction pyridoxine + ATP = pyridoxine 5'-phosphate + ADP + H(+). The catalysed reaction is pyridoxamine + ATP = pyridoxamine 5'-phosphate + ADP + H(+). It functions in the pathway cofactor metabolism; pyridoxal 5'-phosphate salvage; pyridoxal 5'-phosphate from pyridoxal: step 1/1. Its pathway is cofactor metabolism; pyridoxal 5'-phosphate salvage; pyridoxine 5'-phosphate from pyridoxine: step 1/1. The protein operates within cofactor metabolism; pyridoxal 5'-phosphate salvage; pyridoxamine 5'-phosphate from pyridoxamine: step 1/1. Its function is as follows. B6-vitamer kinase involved in the salvage pathway of pyridoxal 5'-phosphate (PLP). Catalyzes the phosphorylation of pyridoxine (PN), pyridoxal (PL), and pyridoxamine (PM), forming their respective 5'-phosphorylated esters, i.e. PNP, PLP and PMP. This Bordetella avium (strain 197N) protein is Pyridoxine/pyridoxal/pyridoxamine kinase.